Reading from the N-terminus, the 72-residue chain is UPF0154 protein Bcer98_2334 (72 aa).

Residues 3–23 (IWSGILVGVVALLAGVALGFF) traverse the membrane as a helical segment.

This sequence belongs to the UPF0154 family.

Its subcellular location is the cell membrane. This chain is UPF0154 protein Bcer98_2334, found in Bacillus cytotoxicus (strain DSM 22905 / CIP 110041 / 391-98 / NVH 391-98).